The following is a 487-amino-acid chain: ATP-dependent 6-phosphofructokinase (487 aa).

ATP is bound by residues glycine 107, 173–174 (RG), 198–201 (GDGT), and lysine 226. Aspartate 199 lines the Mg(2+) pocket. Substrate contacts are provided by residues 227-229 (TID), 272-274 (MGR), and glutamate 325. Residue aspartate 229 is the Proton acceptor of the active site. 341–343 (SGN) contributes to the ATP binding site. 380–383 (YMIR) is a binding site for substrate. Residues 485-487 (AKL) carry the Peroxisomal targeting signal motif.

It belongs to the phosphofructokinase type A (PFKA) family. PPi-dependent PFK group II subfamily. Atypical ATP-dependent clade 'X' sub-subfamily. In terms of assembly, homotetramer. It depends on Mg(2+) as a cofactor.

It localises to the glycosome. The enzyme catalyses beta-D-fructose 6-phosphate + ATP = beta-D-fructose 1,6-bisphosphate + ADP + H(+). It participates in carbohydrate degradation; glycolysis; D-glyceraldehyde 3-phosphate and glycerone phosphate from D-glucose: step 3/4. With respect to regulation, allosterically activated by AMP. Catalyzes the phosphorylation of D-fructose 6-phosphate to fructose 1,6-bisphosphate by ATP, the first committing step of glycolysis. This chain is ATP-dependent 6-phosphofructokinase, found in Trypanosoma brucei brucei.